Consider the following 48-residue polypeptide: Large ribosomal subunit protein eL40 (48 aa).

This sequence belongs to the eukaryotic ribosomal protein eL40 family.

The polypeptide is Large ribosomal subunit protein eL40 (Methanoregula boonei (strain DSM 21154 / JCM 14090 / 6A8)).